A 1040-amino-acid chain; its full sequence is Alpha-mannosidase 2C1 (1040 aa).

Co(2+)-binding residues include His260, Asp262, Asp372, and His577. Asp372 serves as the catalytic Nucleophile.

Belongs to the glycosyl hydrolase 38 family. It depends on Co(2+) as a cofactor.

Its subcellular location is the cytoplasm. It catalyses the reaction Hydrolysis of terminal, non-reducing alpha-D-mannose residues in alpha-D-mannosides.. Strongly inhibited by swainsonine. Also inhibited to a lesser extent by deoxymannojirimycin (DMM). Cleaves alpha 1,2-, alpha 1,3-, and alpha 1,6-linked mannose residues on cytoplasmic free oligosaccharides generated by N-glycoprotein degradation pathways. This Homo sapiens (Human) protein is Alpha-mannosidase 2C1 (MAN2C1).